Consider the following 172-residue polypeptide: ATP synthase subunit b (172 aa).

A helical membrane pass occupies residues 18-38 (IVWSLIILVIVAVFFYKFFMP).

It belongs to the ATPase B chain family. F-type ATPases have 2 components, F(1) - the catalytic core - and F(0) - the membrane proton channel. F(1) has five subunits: alpha(3), beta(3), gamma(1), delta(1), epsilon(1). F(0) has three main subunits: a(1), b(2) and c(10-14). The alpha and beta chains form an alternating ring which encloses part of the gamma chain. F(1) is attached to F(0) by a central stalk formed by the gamma and epsilon chains, while a peripheral stalk is formed by the delta and b chains.

The protein localises to the cell membrane. Functionally, f(1)F(0) ATP synthase produces ATP from ADP in the presence of a proton or sodium gradient. F-type ATPases consist of two structural domains, F(1) containing the extramembraneous catalytic core and F(0) containing the membrane proton channel, linked together by a central stalk and a peripheral stalk. During catalysis, ATP synthesis in the catalytic domain of F(1) is coupled via a rotary mechanism of the central stalk subunits to proton translocation. Its function is as follows. Component of the F(0) channel, it forms part of the peripheral stalk, linking F(1) to F(0). The polypeptide is ATP synthase subunit b (Bifidobacterium longum (strain DJO10A)).